The following is a 291-amino-acid chain: Small ribosomal subunit biogenesis GTPase RsgA (291 aa).

Positions 63–221 (QNELKRPPVS…VADTPGFSAL (159 aa)) constitute a CP-type G domain. Residues 112–115 (TKKD) and 164–172 (GQSGVGKST) contribute to the GTP site. 4 residues coordinate Zn(2+): Cys245, Cys250, His252, and Cys258.

The protein belongs to the TRAFAC class YlqF/YawG GTPase family. RsgA subfamily. As to quaternary structure, monomer. Associates with 30S ribosomal subunit, binds 16S rRNA. The cofactor is Zn(2+).

Its subcellular location is the cytoplasm. Its function is as follows. One of several proteins that assist in the late maturation steps of the functional core of the 30S ribosomal subunit. Helps release RbfA from mature subunits. May play a role in the assembly of ribosomal proteins into the subunit. Circularly permuted GTPase that catalyzes slow GTP hydrolysis, GTPase activity is stimulated by the 30S ribosomal subunit. The protein is Small ribosomal subunit biogenesis GTPase RsgA of Staphylococcus carnosus (strain TM300).